The sequence spans 90 residues: Long neurotoxin 7 (90 aa).

The first 21 residues, 1–21 (MKTLLLTLVLVTIMCLDLGYT), serve as a signal peptide directing secretion. Disulfide bonds link cysteine 24–cysteine 41, cysteine 35–cysteine 62, cysteine 47–cysteine 51, cysteine 66–cysteine 77, and cysteine 78–cysteine 83.

It belongs to the three-finger toxin family. Long-chain subfamily. Type II alpha-neurotoxin sub-subfamily. Expressed by the venom gland.

The protein localises to the secreted. In terms of biological role, binds with high affinity to muscular (alpha-1/CHRNA1) and neuronal (alpha-7/CHRNA7) nicotinic acetylcholine receptor (nAChR) and inhibits acetylcholine from binding to the receptor, thereby impairing neuromuscular and neuronal transmission. The polypeptide is Long neurotoxin 7 (Naja sputatrix (Malayan spitting cobra)).